The sequence spans 3926 residues: Hybrid PKS-NRPS synthetase LUC5 (3926 aa).

One can recognise a Ketosynthase family 3 (KS3) domain in the interval 8–439 (REPIAIVGTA…GTNAHAIIES (432 aa)). Catalysis depends on for beta-ketoacyl synthase activity residues Cys181, His318, and His359. The malonyl-CoA:ACP transacylase (MAT) domain stretch occupies residues 545-863 (VFTGQGAQWP…QGALTRNVHD (319 aa)). The interval 932–1065 (HPLLGTRSTE…GHLRVDFGSE (134 aa)) is N-terminal hotdog fold. A dehydratase (DH) domain region spans residues 932–1225 (HPLLGTRSTE…GLTCTSLLRP (294 aa)). The PKS/mFAS DH domain maps to 932–1228 (HPLLGTRSTE…CTSLLRPGPS (297 aa)). Residue His964 is the Proton acceptor; for dehydratase activity of the active site. Residues 1081–1228 (LTSVNIERFY…CTSLLRPGPS (148 aa)) are C-terminal hotdog fold. The active-site Proton donor; for dehydratase activity is Asp1138. Positions 1344–1572 (IRAVGENLTE…VNDFYDPSKY (229 aa)) are C-methyltransferase (CMeT) domain. The tract at residues 2091 to 2265 (TYLLAGCTGG…AASVIHIGMI (175 aa)) is ketoreductase (KR) domain 1. The region spanning 2371–2448 (EMLEVVEEEF…EICSTAVASL (78 aa)) is the Carrier 1 domain. Ser2408 carries the post-translational modification O-(pantetheine 4'-phosphoryl)serine. Residues 2474–2506 (VSGNGSSSSRAPTEFNSSTLKSGAQSTQGTSVS) show a composition bias toward polar residues. Residues 2474-2518 (VSGNGSSSSRAPTEFNSSTLKSGAQSTQGTSVSGDKDTNSVDGSA) form a disordered region. The span at 2507-2518 (GDKDTNSVDGSA) shows a compositional bias: basic and acidic residues. The segment at 2525–2810 (PLSFAQERIW…VNLLPLRFQL (286 aa)) is condensation. The interval 2979-3389 (DWVKRQPDAI…RIAGDSQIKL (411 aa)) is adenylation. In terms of domain architecture, Carrier 2 spans 3501–3580 (ETLTTTQERL…GMAAKIDGST (80 aa)). O-(pantetheine 4'-phosphoryl)serine is present on Ser3540. Residues 3619–3840 (LTGATGFLGL…DFVPVEQVAD (222 aa)) are thiolester reductase (TE) domain.

It in the C-terminal section; belongs to the NRP synthetase family.

It functions in the pathway mycotoxin biosynthesis. Its function is as follows. Hybrid PKS-NRPS synthetase; part of the gene cluster that mediates the biosynthesis of the mycotoxin lucilactaene and the lucilactaene-related compound NG-391 that act as cell cycle inhibitors with potent growth inhibitory activity against malarial parasites, moderate growth inhibitory activity against cancer cells, and no activity against bacteria and fungi. The hybrid PKS-NRPS synthetase LUC5 is responsible for the condensation of one acetyl-coenzyme A (CoA) unit with six malonyl-CoA units and the amide linkage of the arising heptaketide and homoserine, subsequently releasing the first intermediate prelucilactaene B, as an alcohol with an open ring structure. Lucilactaene and NG-391 lack the 7-methyl group present in fusarins which is inserted in fusarins by the C-methyltransferase (CMeT) domain of the fusarin synthetase FUS1, suggesting that the CMet domain of LUC5 does not methylate this position. Within the pathway, both the cytochrome P450 monooxygenase LUC2 and the hydrolase LUC6 function in parallel in modification of prelucilactaene B. LUC6 may catalyze the 2-pyrrolidone ring formation to form prelucilactaene C from prelucilactaene B, followed by C-15 hydroxylation by the same enzyme to give prelucilactaene D, which is then converted to prelucilactaene E by epoxidation, and finally to prelucilactaene F by cyclization. Prelucilactane D, prelucilactaene E, and prelucilactaene F can be converted to dihydrolucilactaene, NG391, and lucilactaene, respectively, via C-20 methyl group hydroxylation by the cytochrome P450 monooxygenase LUC2. However, LUC2, unlike FUS8 in fusarin C biosynthesis, is not enough for the full oxidation of the C-20 methyl group into carboxylic acid, which is a prerequisite for the final methylation step. The aldehyde dehydrogenase LUC3 is involved in the biosynthesis by further oxidation of the C-20 alcoholic analog prelucilactaene G into a carboxylic derivative. This unidentified carboxylic derivative may be converted to demethyllucilactaene. As the last step, the methyltransferase LUC1 methylates the hydroxyl group at C-21 of demethyllucilactaene to generate lucilactaene. The protein is Hybrid PKS-NRPS synthetase LUC5 of Fusarium sp.